A 207-amino-acid polypeptide reads, in one-letter code: Outer-membrane lipoprotein LolB (207 aa).

Residues M1 to S26 form the signal peptide. C27 carries N-palmitoyl cysteine lipidation. Residue C27 is the site of S-diacylglycerol cysteine attachment.

The protein belongs to the LolB family. As to quaternary structure, monomer.

Its subcellular location is the cell outer membrane. Functionally, plays a critical role in the incorporation of lipoproteins in the outer membrane after they are released by the LolA protein. The polypeptide is Outer-membrane lipoprotein LolB (Francisella tularensis subsp. tularensis (strain FSC 198)).